Reading from the N-terminus, the 2463-residue chain is Protein TIC 214 (2463 aa).

6 consecutive transmembrane segments (helical) span residues 18–38 (VGLY…LFLL), 60–80 (FFTG…HLAL), 86–106 (ILLL…SGQW), 127–147 (LVFL…GRPM), 170–190 (FVGW…VFVW), and 297–317 (LFSI…PLLY). Residues 326 to 441 (QLQRKLSNET…AARAMQEAYK (116 aa)) are a coiled coil. Disordered regions lie at residues 792-841 (AVPK…RKVN), 1230-1249 (SIQK…GPKK), 1393-1417 (SGGR…EQDF), 2116-2136 (EEEK…KLKK), and 2162-2187 (KQRA…RKVQ). Residues 794–830 (PKKKKKISKSKQKNVKSKQKNVKSKQKNVKSKQKNVK) are compositionally biased toward basic residues. 3 stretches are compositionally biased toward basic and acidic residues: residues 832-841 (KQNEIKRKVN), 1231-1249 (IQKD…GPKK), and 1397-1417 (ETPE…EQDF). Positions 2049-2192 (WDALVASLKQ…KRKVQVQENK (144 aa)) form a coiled coil. Residues 2124 to 2136 (KRKKERKKEKLKK) show a composition bias toward basic residues.

Belongs to the TIC214 family. Part of the Tic complex.

The protein resides in the plastid. The protein localises to the chloroplast inner membrane. Involved in protein precursor import into chloroplasts. May be part of an intermediate translocation complex acting as a protein-conducting channel at the inner envelope. This is Protein TIC 214 from Oenothera elata subsp. hookeri (Hooker's evening primrose).